Consider the following 591-residue polypeptide: L-fucose isomerase (591 aa).

Catalysis depends on proton acceptor residues E337 and D361. The Mn(2+) site is built by E337, D361, and H528.

Belongs to the L-fucose isomerase family. As to quaternary structure, homohexamer. Mn(2+) is required as a cofactor.

The protein resides in the cytoplasm. The catalysed reaction is L-fucose = L-fuculose. Its pathway is carbohydrate degradation; L-fucose degradation; L-lactaldehyde and glycerone phosphate from L-fucose: step 1/3. Its function is as follows. Converts the aldose L-fucose into the corresponding ketose L-fuculose. This Escherichia coli O6:H1 (strain CFT073 / ATCC 700928 / UPEC) protein is L-fucose isomerase.